The following is a 291-amino-acid chain: Maintenance of mitochondrial morphology protein 1 (291 aa).

Over 1–16 (MPNNYVFSLQPTFTQG) the chain is Lumenal. A helical membrane pass occupies residues 17–37 (LILGQLSILVLLGMILKFLFL). At 38–291 (DSTQHPFESS…KKEMSDADLS (254 aa)) the chain is on the cytoplasmic side. Residues 73 to 277 (NAESAEWFNV…LPGLASVVDV (205 aa)) form the SMP-LTD domain.

It belongs to the MMM1 family. As to quaternary structure, homodimer. Component of the ER-mitochondria encounter structure (ERMES) or MDM complex, composed of MMM1, MDM10, MDM12 and MDM34. An MMM1 homodimer associates with one molecule of MDM12 on each side in a pairwise head-to-tail manner, and the SMP-LTD domains of MMM1 and MDM12 generate a continuous hydrophobic tunnel for phospholipid trafficking.

It is found in the endoplasmic reticulum membrane. Component of the ERMES/MDM complex, which serves as a molecular tether to connect the endoplasmic reticulum (ER) and mitochondria. Components of this complex are involved in the control of mitochondrial shape and protein biogenesis, and function in nonvesicular lipid trafficking between the ER and mitochondria. The MDM12-MMM1 subcomplex functions in the major beta-barrel assembly pathway that is responsible for biogenesis of all outer membrane beta-barrel proteins, and acts in a late step after the SAM complex. The MDM10-MDM12-MMM1 subcomplex further acts in the TOM40-specific pathway after the action of the MDM12-MMM1 complex. Essential for establishing and maintaining the structure of mitochondria and maintenance of mtDNA nucleoids. The chain is Maintenance of mitochondrial morphology protein 1 from Laccaria bicolor (strain S238N-H82 / ATCC MYA-4686) (Bicoloured deceiver).